A 331-amino-acid polypeptide reads, in one-letter code: Ferredoxin--NADP reductase (331 aa).

E38, Q46, Y51, A91, L125, D282, and S323 together coordinate FAD.

Belongs to the ferredoxin--NADP reductase type 2 family. In terms of assembly, homodimer. Requires FAD as cofactor.

It catalyses the reaction 2 reduced [2Fe-2S]-[ferredoxin] + NADP(+) + H(+) = 2 oxidized [2Fe-2S]-[ferredoxin] + NADPH. This chain is Ferredoxin--NADP reductase, found in Deinococcus geothermalis (strain DSM 11300 / CIP 105573 / AG-3a).